We begin with the raw amino-acid sequence, 198 residues long: Transcriptional regulator GfcR (198 aa).

The protein belongs to the purine/pyrimidine phosphoribosyltransferase family. GfcR subfamily.

This chain is Transcriptional regulator GfcR, found in Methanospirillum hungatei JF-1 (strain ATCC 27890 / DSM 864 / NBRC 100397 / JF-1).